Reading from the N-terminus, the 215-residue chain is Histone H1.1 (215 aa).

The segment at 1-43 (MSETVPPAPAASAAPEKPLAGKKAKKPAKAAAASKKKPAGPSV) is disordered. Position 2 is an N-acetylserine (Ser2). Phosphoserine is present on residues Ser2 and Ser12. Lys17 carries the post-translational modification N6-acetyllysine. The span at 20 to 38 (AGKKAKKPAKAAAASKKKP) shows a compositional bias: basic residues. Lys37 carries the N6-(beta-hydroxybutyryl)lysine modification. An H15 domain is found at 39–112 (AGPSVSELIV…GASGSFKLNK (74 aa)). Ser44 is subject to Phosphoserine. N6-(beta-hydroxybutyryl)lysine is present on Lys55. Position 57 is a citrulline (Arg57). Lys67 carries the post-translational modification N6-(beta-hydroxybutyryl)lysine. The residue at position 78 (Lys78) is an N6-acetyllysine. An N6-(beta-hydroxybutyryl)lysine modification is found at Lys88. At Lys93 the chain carries N6-(beta-hydroxybutyryl)lysine; alternate. N6-acetyllysine; alternate is present on Lys93. The tract at residues 94–215 (GTLVQTKGTG…KPKKAAPKKK (122 aa)) is disordered. Ser107 bears the Phosphoserine mark. An N6-(beta-hydroxybutyryl)lysine modification is found at Lys109. Residues 122-147 (GASKVATKTKATGASKKLKKATGASK) are compositionally biased toward low complexity. Lys125 is modified (N6-acetyllysine). Composition is skewed to basic residues over residues 148–181 (KSVKTPKKAKKPAATRKSSKNPKKPKTVKPKKVA) and 188–215 (KAVKPKAAKARVTKPKTAKPKKAAPKKK). Position 204 is a phosphothreonine (Thr204).

This sequence belongs to the histone H1/H5 family. As to quaternary structure, interacts with DFFB. H1 histones are progressively phosphorylated during the cell cycle, becoming maximally phosphorylated during late G2 phase and M phase, and being dephosphorylated sharply thereafter. Post-translationally, citrullination at Arg-57 (H1R54ci) by PADI4 takes place within the DNA-binding site of H1 and results in its displacement from chromatin and global chromatin decondensation, thereby promoting pluripotency and stem cell maintenance.

It localises to the nucleus. The protein localises to the chromosome. Histone H1 protein binds to linker DNA between nucleosomes forming the macromolecular structure known as the chromatin fiber. Histones H1 are necessary for the condensation of nucleosome chains into higher-order structured fibers. Also acts as a regulator of individual gene transcription through chromatin remodeling, nucleosome spacing and DNA methylation. The chain is Histone H1.1 from Homo sapiens (Human).